Here is a 145-residue protein sequence, read N- to C-terminus: 3-hydroxyacyl-[acyl-carrier-protein] dehydratase FabZ (145 aa).

The active site involves H47.

Belongs to the thioester dehydratase family. FabZ subfamily.

It is found in the cytoplasm. It catalyses the reaction a (3R)-hydroxyacyl-[ACP] = a (2E)-enoyl-[ACP] + H2O. In terms of biological role, involved in unsaturated fatty acids biosynthesis. Catalyzes the dehydration of short chain beta-hydroxyacyl-ACPs and long chain saturated and unsaturated beta-hydroxyacyl-ACPs. The polypeptide is 3-hydroxyacyl-[acyl-carrier-protein] dehydratase FabZ (Chromohalobacter salexigens (strain ATCC BAA-138 / DSM 3043 / CIP 106854 / NCIMB 13768 / 1H11)).